Reading from the N-terminus, the 209-residue chain is Putative tripartite motif-containing protein 61 (209 aa).

Residues 16–57 form an RING-type zinc finger; sequence CPICLDYLKDPVTISCGHNFCLSCIIMSWKDLHDSFPCPFCH. A B box-type zinc finger spans residues 92 to 133; that stretch reads EEKHVCKKHNQVLTFFCQKDLELLCPRCSLSTDHQHHCVWPI. Zn(2+) is bound by residues cysteine 97, histidine 100, cysteine 119, and histidine 125.

In Homo sapiens (Human), this protein is Putative tripartite motif-containing protein 61 (TRIM61).